Consider the following 419-residue polypeptide: Equilibrative nucleotide transporter 5 (419 aa).

The next 11 helical transmembrane spans lie at 20–40, 56–76, 86–106, 108–128, 142–162, 186–206, 265–285, 292–312, 327–347, 354–374, and 393–413; these read MVVC…LLSV, VLTF…AYNE, LIGY…DLAT, GHGG…FGFA, LMCP…GALT, IFLA…AYVF, YVVN…GFLY, GLGS…DLVG, KGLT…YFTA, WMIL…VCIL, and LVLF…LWLI.

The protein belongs to the SLC29A/ENT transporter (TC 2.A.57) family.

It is found in the cell membrane. In terms of biological role, may be involved in nucleoside transport. The chain is Equilibrative nucleotide transporter 5 (ENT5) from Arabidopsis thaliana (Mouse-ear cress).